We begin with the raw amino-acid sequence, 435 residues long: Probable alpha-galactosidase B (435 aa).

The first 18 residues, 1–18, serve as a signal peptide directing secretion; sequence MLTSLSLTALALLPSANA. Cysteine 41 and cysteine 73 are oxidised to a cystine. Asparagine 81 carries an N-linked (GlcNAc...) asparagine glycan. The cysteines at positions 123 and 153 are disulfide-linked. Aspartate 151 (nucleophile) is an active-site residue. N-linked (GlcNAc...) asparagine glycosylation is found at asparagine 158 and asparagine 176. Position 221-225 (221-225) interacts with substrate; sequence DWGQA. Asparagine 232 carries N-linked (GlcNAc...) asparagine glycosylation. The active-site Proton donor is the aspartate 243. An N-linked (GlcNAc...) asparagine glycan is attached at asparagine 378.

This sequence belongs to the glycosyl hydrolase 27 family.

It localises to the secreted. It catalyses the reaction Hydrolysis of terminal, non-reducing alpha-D-galactose residues in alpha-D-galactosides, including galactose oligosaccharides, galactomannans and galactolipids.. Hydrolyzes a variety of simple alpha-D-galactoside as well as more complex molecules such as oligosaccharides and polysaccharides. This is Probable alpha-galactosidase B (agl1) from Penicillium simplicissimum.